We begin with the raw amino-acid sequence, 325 residues long: Golgi to ER traffic protein 4 homolog A (325 aa).

Disordered regions lie at residues 1–22 and 306–325; these read MAAA…GGVQ and SGED…IELD. Acidic residues predominate over residues 307–317; sequence GEDDDVEDGQE.

This sequence belongs to the GET4 family. In terms of assembly, component of the bag6/bat3 complex.

The protein resides in the cytoplasm. Its subcellular location is the cytosol. Its function is as follows. As part of a cytosolic protein quality control complex, the bag6/bat3 complex, maintains misfolded and hydrophobic patches-containing proteins in a soluble state and participates in their proper delivery to the endoplasmic reticulum or alternatively can promote their sorting to the proteasome where they undergo degradation. The bag6/bat3 complex is involved in the post-translational delivery of tail-anchored/type II transmembrane proteins to the endoplasmic reticulum membrane. Similarly, the bag6/bat3 complex also functions as a sorting platform for proteins of the secretory pathway that are mislocalized to the cytosol either delivering them to the proteasome for degradation or to the endoplasmic reticulum. The bag6/bat3 complex also plays a role in the endoplasmic reticulum-associated degradation (ERAD), a quality control mechanism that eliminates unwanted proteins of the endoplasmic reticulum through their retrotranslocation to the cytosol and their targeting to the proteasome. It maintains these retrotranslocated proteins in an unfolded yet soluble state condition in the cytosol to ensure their proper delivery to the proteasome. This chain is Golgi to ER traffic protein 4 homolog A (get4-a), found in Xenopus laevis (African clawed frog).